We begin with the raw amino-acid sequence, 342 residues long: MSAPGGPLARLEARVTREWQRRGALAWALTPFACVFGLCAALRRTAYAQGWKQPVDVGVPVVVVGNVTVGGTGKTPTVIALVDALRAAGFTPGVVSRGYGANVKTPTAVTPASRASAAGDEPLLIARRTDAPVWVCPDRVAAAQALRAAHPDVDVIVSDDGLQHYRLARTVELVVFDHRLGGNGFLLPAGPLREPLSRHRDATLVNDPYSGALPPWPDTYALALTPGAAWHLDQPALRRPLSQFAHERVLAAAGIGAPERFFATLRAAGLAPTTRALPDHYAFADNPFVDDAVDAILITEKDAVKLGASWRDARLWVVPVEAALDPRLIALVVEKLRGRSPA.

ATP is bound at residue 68 to 75 (TVGGTGKT).

It belongs to the LpxK family.

The enzyme catalyses a lipid A disaccharide + ATP = a lipid IVA + ADP + H(+). It participates in glycolipid biosynthesis; lipid IV(A) biosynthesis; lipid IV(A) from (3R)-3-hydroxytetradecanoyl-[acyl-carrier-protein] and UDP-N-acetyl-alpha-D-glucosamine: step 6/6. Transfers the gamma-phosphate of ATP to the 4'-position of a tetraacyldisaccharide 1-phosphate intermediate (termed DS-1-P) to form tetraacyldisaccharide 1,4'-bis-phosphate (lipid IVA). This Burkholderia ambifaria (strain ATCC BAA-244 / DSM 16087 / CCUG 44356 / LMG 19182 / AMMD) (Burkholderia cepacia (strain AMMD)) protein is Tetraacyldisaccharide 4'-kinase.